The primary structure comprises 990 residues: Glycine dehydrogenase (decarboxylating) (990 aa).

An N6-(pyridoxal phosphate)lysine modification is found at Lys-726.

It belongs to the GcvP family. The glycine cleavage system is composed of four proteins: P, T, L and H. Requires pyridoxal 5'-phosphate as cofactor.

It carries out the reaction N(6)-[(R)-lipoyl]-L-lysyl-[glycine-cleavage complex H protein] + glycine + H(+) = N(6)-[(R)-S(8)-aminomethyldihydrolipoyl]-L-lysyl-[glycine-cleavage complex H protein] + CO2. In terms of biological role, the glycine cleavage system catalyzes the degradation of glycine. The P protein binds the alpha-amino group of glycine through its pyridoxal phosphate cofactor; CO(2) is released and the remaining methylamine moiety is then transferred to the lipoamide cofactor of the H protein. The chain is Glycine dehydrogenase (decarboxylating) from Rhodopseudomonas palustris (strain ATCC BAA-98 / CGA009).